We begin with the raw amino-acid sequence, 181 residues long: ATP synthase subunit delta (181 aa).

The protein belongs to the ATPase delta chain family. In terms of assembly, F-type ATPases have 2 components, F(1) - the catalytic core - and F(0) - the membrane proton channel. F(1) has five subunits: alpha(3), beta(3), gamma(1), delta(1), epsilon(1). F(0) has three main subunits: a(1), b(2) and c(10-14). The alpha and beta chains form an alternating ring which encloses part of the gamma chain. F(1) is attached to F(0) by a central stalk formed by the gamma and epsilon chains, while a peripheral stalk is formed by the delta and b chains.

Its subcellular location is the cell inner membrane. Its function is as follows. F(1)F(0) ATP synthase produces ATP from ADP in the presence of a proton or sodium gradient. F-type ATPases consist of two structural domains, F(1) containing the extramembraneous catalytic core and F(0) containing the membrane proton channel, linked together by a central stalk and a peripheral stalk. During catalysis, ATP synthesis in the catalytic domain of F(1) is coupled via a rotary mechanism of the central stalk subunits to proton translocation. Functionally, this protein is part of the stalk that links CF(0) to CF(1). It either transmits conformational changes from CF(0) to CF(1) or is implicated in proton conduction. This is ATP synthase subunit delta from Desulfotalea psychrophila (strain LSv54 / DSM 12343).